Consider the following 220-residue polypeptide: WAP four-disulfide core domain protein 1 (220 aa).

A signal peptide spans 1–31 (MPLTGVGPGSCRRQIIRALCLLLLLLHAGSA). The disordered stretch occupies residues 46–70 (KSRAEEAGAPGGPRQPRADRCPPPP). In terms of domain architecture, WAP spans 59 to 108 (RQPRADRCPPPPRTLPPGACQAARCQADSECPRHRRCCYNGCAYACLEAV). 4 cysteine pairs are disulfide-bonded: Cys-66–Cys-96, Cys-78–Cys-100, Cys-83–Cys-95, and Cys-89–Cys-104. Residues 199–220 (EYPEGDSKNVAEPGRGQQKHFQ) are disordered.

The protein resides in the secreted. Functionally, has growth inhibitory activity. This is WAP four-disulfide core domain protein 1 (WFDC1) from Homo sapiens (Human).